A 277-amino-acid chain; its full sequence is Anamorsin homolog 2 (277 aa).

Positions 1–141 are N-terminal SAM-like domain; it reads MDTQPIVLVI…RKPAWDTGSS (141 aa). Positions 141–186 are linker; that stretch reads SFKLKKKVAQKPANVVTFDIPAFKVQLGDDLDDLIDEDSLLTEEDL. [2Fe-2S] cluster is bound by residues Cys-197, Cys-207, Cys-210, and Cys-212. Residues 197-212 are fe-S binding site A; the sequence is CEVGKAGRKACKNCTC. Positions 238, 241, 249, and 252 each coordinate [4Fe-4S] cluster. Short sequence motifs (cx2C motif) lie at residues 238-241 and 249-252; these read CGSC and CSTC. The interval 238 to 252 is fe-S binding site B; the sequence is CGSCGLGDAFRCSTC.

This sequence belongs to the anamorsin family. As to quaternary structure, monomer. [2Fe-2S] cluster serves as cofactor. [4Fe-4S] cluster is required as a cofactor.

The protein localises to the cytoplasm. It localises to the mitochondrion intermembrane space. Functionally, component of the cytosolic iron-sulfur (Fe-S) protein assembly (CIA) machinery. Required for the maturation of extramitochondrial Fe-S proteins. Part of an electron transfer chain functioning in an early step of cytosolic Fe-S biogenesis, facilitating the de novo assembly of a [4Fe-4S] cluster on the cytosolic Fe-S scaffold complex. Electrons are transferred from NADPH via a FAD- and FMN-containing diflavin oxidoreductase. Together with the diflavin oxidoreductase, also required for the assembly of the diferric tyrosyl radical cofactor of ribonucleotide reductase (RNR), probably by providing electrons for reduction during radical cofactor maturation in the catalytic small subunit. The protein is Anamorsin homolog 2 of Picea sitchensis (Sitka spruce).